Consider the following 373-residue polypeptide: Peroxisomal biogenesis factor 3 (373 aa).

At 1-15 the chain is on the cytoplasmic side; sequence MFRSTWNFLKRHKKK. The tract at residues 1 to 45 is targeting to peroxisomes; sequence MFRSTWNFLKRHKKKCIFLGTVLGGVYILGKYGQKKIREIQEREA. A helical transmembrane segment spans residues 16 to 36; that stretch reads CIFLGTVLGGVYILGKYGQKK. At 37–116 the chain is on the peroxisomal side; that stretch reads IREIQEREAA…LKIISFTRSI (80 aa). Residues 117-140 traverse the membrane as a helical segment; the sequence is VAVYSTCMLVVLLRVQLNIIGGYI. An interaction with PEX19 region spans residues 120-136; that stretch reads YSTCMLVVLLRVQLNII. Topologically, residues 141 to 373 are cytoplasmic; that stretch reads YLDNAAVGKN…AFSTPQQLEK (233 aa).

Belongs to the peroxin-3 family. Interacts with PEX19.

The protein resides in the peroxisome membrane. In terms of biological role, involved in peroxisome biosynthesis and integrity. Assembles membrane vesicles before the matrix proteins are translocated. As a docking factor for PEX19, is necessary for the import of peroxisomal membrane proteins in the peroxisomes. The chain is Peroxisomal biogenesis factor 3 (PEX3) from Bos taurus (Bovine).